The primary structure comprises 722 residues: Polymerase basic protein 2 (722 aa).

In terms of assembly, the RNA polymerase is composed of three subunits: PB1, PB2 and PA.

The protein localises to the virion. The protein resides in the host nucleus. Involved in transcription initiation and cap-stealing mechanism, in which cellular capped pre-mRNA are used to generate primers for viral transcription. Binds the cap of the target pre-RNA which is subsequently cleaved by PB1. May play a role in genome replication. This chain is Polymerase basic protein 2, found in Gadus morhua (Atlantic cod).